The primary structure comprises 299 residues: Regucalcin (299 aa).

Glu18 is an a divalent metal cation binding site. Substrate-binding residues include Arg101, Asn103, and Glu121. An N6-succinyllysine modification is found at Lys144. A divalent metal cation-binding residues include Asn154 and Asp204. Asp204 serves as the catalytic Proton donor/acceptor. N6-succinyllysine occurs at positions 244 and 253.

This sequence belongs to the SMP-30/CGR1 family. In terms of assembly, monomer. It depends on Zn(2+) as a cofactor. Mn(2+) is required as a cofactor. Requires Ca(2+) as cofactor. The cofactor is Mg(2+).

The protein localises to the cytoplasm. It carries out the reaction D-glucono-1,5-lactone + H2O = D-gluconate + H(+). Its function is as follows. Gluconolactonase with low activity towards other sugar lactones, including gulonolactone and galactonolactone. Can also hydrolyze diisopropyl phosphorofluoridate and phenylacetate (in vitro). Calcium-binding protein. Modulates Ca(2+) signaling, and Ca(2+)-dependent cellular processes and enzyme activities. This Macaca fascicularis (Crab-eating macaque) protein is Regucalcin (RGN).